A 579-amino-acid polypeptide reads, in one-letter code: MAGTVRTACLLVAMLLGLGCLGQAQPPPPPDATCHQVRSFFQRLQPGLKWVPETPVPGSDLQVCLPKGPTCCSRKMEEKYQLTARLNMEQLLQSASMELKFLIIQNAAVFQEAFEIVVRHAKNYTNAMFKNNYPSLTPQAFEFVGEFFTDVSLYILGSDINVDDMVNELFDSLFPVIYTQMMNPGLPESVLDINECLRGARRDLKVFGSFPKLIMTQVSKSLQVTRIFLQALNLGIEVINTTDHLKFSKDCGRMLTRMWYCSYCQGLMMVKPCGGYCNVVMQGCMAGVVEIDKYWREYILSLEELVNGMYRIYDMENVLLGLFSTIHDSIQYVQKNGGKLTTTIGKLCAHSQQRQYRSAYYPEDLFIDKKILKVAHVEHEETLSSRRRELIQKLKSFINFYSALPGYICSHSPVAENDTLCWNGQELVERYSQKAARNGMKNQFNLHELKMKGPEPVVSQIIDKLKHINQLLRTMSVPKGKVLDKSLDEEGLESGDCGDDEDECIGSSGDGMVKVKNQLRFLAELAYDLDVDDAPGNKQHGNQKDNEITTSHSVGNMPSPLKILISVAIYVACFFFLVH.

An N-terminal signal peptide occupies residues 1 to 24 (MAGTVRTACLLVAMLLGLGCLGQA). Gln-25 is subject to Pyrrolidone carboxylic acid. 7 cysteine pairs are disulfide-bonded: Cys-34-Cys-71, Cys-64-Cys-261, Cys-72-Cys-264, Cys-196-Cys-348, Cys-251-Cys-284, Cys-273-Cys-421, and Cys-277-Cys-409. Asn-123 and Asn-240 each carry an N-linked (GlcNAc...) asparagine glycan. Ser-351 is subject to Phosphoserine. Residue Asn-417 is glycosylated (N-linked (GlcNAc...) asparagine). 2 O-linked (Xyl...) (glycosaminoglycan) serine glycosylation sites follow: Ser-494 and Ser-508. Residues 533–552 (DAPGNKQHGNQKDNEITTSH) form a disordered region. Ser-553 carries GPI-anchor amidated serine lipidation. Residues 554-579 (VGNMPSPLKILISVAIYVACFFFLVH) constitute a propeptide, removed in mature form.

It belongs to the glypican family. As to quaternary structure, heterodimer; disulfide-linked. Cleavage by a furin-like convertase results in production of alpha and beta chains which form a disulfide-linked heterodimer. Interacts with DPP4. Interacts with FGF2. Interacts with WNT5A. Also interacts with WNT3A and WNT7B. Interacts with hedgehog protein SHH; the heparan sulfate chains are not required for the interaction. Also interacts with hedgehog protein IHH. Interacts with CD81. Interacts with Wnt receptors FZD4, FZD7 and FZD8; the heparan sulfate chains are required for the interaction. O-glycosylated; contains heparan sulfate and/or chondroitin sulfate. In terms of processing, cleaved intracellularly by a furin-like convertase to generate 2 subunits, alpha and beta, which remain associated through disulfide bonds and are associated with the cell surface via the GPI-anchor. This processing is essential for its role in inhibition of hedgehog signaling. A second proteolytic event may result in cleavage of the protein on the cell surface, separating it from the GPI-anchor and leading to its shedding from the cell surface. In the developing limb, absent from the apical epidermal ridge at 11 dpc but highly expressed in the underlying mesenchyme. Expression in the mesenchyme at this stage is asymmetric with highest levels in the regions of the distal mesenchyme within the progress zone and within the proximal anterior and posterior limb bud. At later developmental stages including 12.5 and 13.5 dpc, expression is restricted to the interdigital webs and the regions of chondrocytic differentiation of the developing bones. In the embryonic kidney, expressed in both the ureteric bud and mesenchymal cells as early as 13.5 dpc. Expression at 16.5 dpc is similar to that at 13.5 dpc but decreases by 18.5 dpc.

It localises to the cell membrane. Its function is as follows. Cell surface proteoglycan. Negatively regulates the hedgehog signaling pathway when attached via the GPI-anchor to the cell surface by competing with the hedgehog receptor PTC1 for binding to hedgehog proteins. Binding to the hedgehog protein SHH triggers internalization of the complex by endocytosis and its subsequent lysosomal degradation. Positively regulates the canonical Wnt signaling pathway by binding to the Wnt receptor Frizzled and stimulating the binding of the Frizzled receptor to Wnt ligands. Positively regulates the non-canonical Wnt signaling pathway. Binds to CD81 which decreases the availability of free CD81 for binding to the transcriptional repressor HHEX, resulting in nuclear translocation of HHEX and transcriptional repression. Inhibits the dipeptidyl peptidase activity of DPP4. Plays a role in limb patterning and skeletal development by controlling the cellular response to BMP4. Modulates the effects of growth factors BMP2, BMP7 and FGF7 on renal branching morphogenesis. Required for coronary vascular development. Plays a role in regulating cell movements during gastrulation. This is Glypican-3 (Gpc3) from Mus musculus (Mouse).